The sequence spans 330 residues: Trans-1,2-dihydrobenzene-1,2-diol dehydrogenase (330 aa).

This sequence belongs to the Gfo/Idh/MocA family. In terms of assembly, homodimer.

It carries out the reaction (1R,2R)-1,2-dihydrobenzene-1,2-diol + NADP(+) = catechol + NADPH + H(+). The enzyme catalyses D-xylose + NADP(+) = D-xylono-1,5-lactone + NADPH + H(+). This is Trans-1,2-dihydrobenzene-1,2-diol dehydrogenase (dhdh) from Xenopus laevis (African clawed frog).